Consider the following 855-residue polypeptide: RE1-silencing transcription factor (855 aa).

Residues phenylalanine 141 to histidine 163 form a C2H2-type 1 zinc finger. The segment at asparagine 172–asparagine 199 is disordered. Residues proline 186–asparagine 199 are compositionally biased toward polar residues. 7 C2H2-type zinc fingers span residues isoleucine 204–histidine 226, phenylalanine 236–histidine 258, phenylalanine 264–histidine 286, phenylalanine 292–histidine 314, phenylalanine 320–histidine 343, leucine 349–histidine 371, and phenylalanine 377–histidine 400. Positions asparagine 458 to serine 811 are disordered. 3 stretches are compositionally biased toward basic and acidic residues: residues glutamate 462 to aspartate 472, asparagine 481 to alanine 496, and alanine 504 to leucine 535. The segment covering serine 548–threonine 569 has biased composition (polar residues). Residues glutamine 570–serine 580 show a composition bias toward basic and acidic residues. Over residues glutamine 594 to lysine 604 the composition is skewed to basic residues. A compositionally biased stretch (basic and acidic residues) spans arginine 628 to glutamine 638. Over residues arginine 639–aspartate 648 the composition is skewed to basic residues. Residues proline 652 to proline 662 show a composition bias toward polar residues. Composition is skewed to basic and acidic residues over residues proline 711 to glutamate 721 and lysine 799 to serine 811. Residues histidine 818–histidine 840 form a C2H2-type 9 zinc finger.

The protein localises to the nucleus. The protein resides in the cytoplasm. Its function is as follows. Transcriptional repressor which binds neuron-restrictive silencer element (NRSE) and represses neuronal gene transcription in non-neuronal cells. The chain is RE1-silencing transcription factor (rest) from Danio rerio (Zebrafish).